A 702-amino-acid chain; its full sequence is Choline transporter-like protein 5-A (702 aa).

The helical transmembrane segment at 21–41 (VLCCVLFVIVILGYIALGTVA) threads the bilayer. Residues 42 to 225 (WIHGDPRKVI…KIVEDYASCW (184 aa)) are Extracellular-facing. 3 N-linked (GlcNAc...) asparagine glycosylation sites follow: Asn-120, Asn-173, and Asn-180. A helical transmembrane segment spans residues 226–246 (YWIVIGLFIALVISLIFILLL). Topologically, residues 247–249 (RFT) are cytoplasmic. The chain crosses the membrane as a helical span at residues 250–270 (AGFLLWFIIFAVILLVAYGIW). Residues 271–308 (HCYWEFAVLRETPGADVTISDIGFQTDLHVYLQLSQTW) lie on the Extracellular side of the membrane. Residues 309 to 329 (LVFMVTLGLTEASIVLMLIFL) traverse the membrane as a helical segment. Over 330 to 334 (RKRVR) the chain is Cytoplasmic. Residues 335–355 (IAIALLREGSRAISYIMSALF) form a helical membrane-spanning segment. Over 356–357 (YP) the chain is Extracellular. Residues 358-378 (IITFVLLAICISYWAMTALFL) form a helical membrane-spanning segment. The Cytoplasmic segment spans residues 379 to 443 (ASSGDAVYKV…RYIFILQLCN (65 aa)). The chain crosses the membrane as a helical span at residues 444 to 464 (LLVFLWLVNFTIALGQCTVAG). Topologically, residues 465-498 (AFASYYWARRKPADIPPCPVFSSFSRALRYHTGS) are extracellular. The helical transmembrane segment at 499-519 (LAFGSLILAVVQLIRVILEYL) threads the bilayer. At 520 to 593 (DHKLKGAHNA…RVAVLDKVTD (74 aa)) the chain is on the cytoplasmic side. Residues 594 to 614 (FLLFLGKLLIAGSVGVIAFFL) traverse the membrane as a helical segment. Residues 615–632 (FTRKIPIIQEEVPVLNYY) are Extracellular-facing. The helical transmembrane segment at 633-653 (CVPLLTVILGSYLIAHSFFSV) threads the bilayer. Residues 654–699 (YAMCVDTLFLCFCEDLERNDGTTAKPFFMSPGLKRILGKAEQSPKK) are Cytoplasmic-facing.

Belongs to the CTL (choline transporter-like) family.

It localises to the cell membrane. The catalysed reaction is choline(out) + n H(+)(in) = choline(in) + n H(+)(out). In terms of biological role, choline/H+ antiporter. The sequence is that of Choline transporter-like protein 5-A (slc44a5a) from Danio rerio (Zebrafish).